Reading from the N-terminus, the 205-residue chain is Holliday junction branch migration complex subunit RuvA (205 aa).

Residues 1 to 63 (MIGMLRGHVE…QDAITLFGFG (63 aa)) are domain I. Residues 64 to 142 (TLASKRMFLQ…LSQIEGSSAT (79 aa)) are domain II. The flexible linker stretch occupies residues 143-145 (AST). Residues 146–205 (PEDTGAEQVVEGLMSLGWHQQDAAHAVQTVCADNQIETPLNAKDVPRVLKLALTSLDRGR) are domain III.

Belongs to the RuvA family. In terms of assembly, homotetramer. Forms an RuvA(8)-RuvB(12)-Holliday junction (HJ) complex. HJ DNA is sandwiched between 2 RuvA tetramers; dsDNA enters through RuvA and exits via RuvB. An RuvB hexamer assembles on each DNA strand where it exits the tetramer. Each RuvB hexamer is contacted by two RuvA subunits (via domain III) on 2 adjacent RuvB subunits; this complex drives branch migration. In the full resolvosome a probable DNA-RuvA(4)-RuvB(12)-RuvC(2) complex forms which resolves the HJ.

The protein localises to the cytoplasm. In terms of biological role, the RuvA-RuvB-RuvC complex processes Holliday junction (HJ) DNA during genetic recombination and DNA repair, while the RuvA-RuvB complex plays an important role in the rescue of blocked DNA replication forks via replication fork reversal (RFR). RuvA specifically binds to HJ cruciform DNA, conferring on it an open structure. The RuvB hexamer acts as an ATP-dependent pump, pulling dsDNA into and through the RuvAB complex. HJ branch migration allows RuvC to scan DNA until it finds its consensus sequence, where it cleaves and resolves the cruciform DNA. This Bifidobacterium adolescentis (strain ATCC 15703 / DSM 20083 / NCTC 11814 / E194a) protein is Holliday junction branch migration complex subunit RuvA.